The primary structure comprises 333 residues: Fe-S cluster assembly protein dre2 (333 aa).

Positions 1-29 (MSPITLDLTSDFNPANTTGAGSSSSQPRT) are disordered. Positions 7–28 (DLTSDFNPANTTGAGSSSSQPR) are enriched in polar residues. Residues 23 to 158 (SSSQPRTLLV…KPDYAEEEAV (136 aa)) form an N-terminal SAM-like domain region. The linker stretch occupies residues 159–225 (PLRFGLKRKT…EDTLLTEADL (67 aa)). The [2Fe-2S] cluster site is built by Cys-235, Cys-246, Cys-249, and Cys-251. Residues 235-251 (CQPKPGKKRRACKDCTC) form a fe-S binding site A region. Positions 296, 299, 307, and 310 each coordinate [4Fe-4S] cluster. 2 consecutive short sequence motifs (cx2C motif) follow at residues 296–299 (CGSC) and 307–310 (CAGC). The fe-S binding site B stretch occupies residues 296 to 310 (CGSCALGDAFRCAGC).

It belongs to the anamorsin family. Monomer. Interacts with tah18. Interacts with mia40. [2Fe-2S] cluster serves as cofactor. It depends on [4Fe-4S] cluster as a cofactor.

It is found in the cytoplasm. The protein localises to the mitochondrion intermembrane space. Its function is as follows. Component of the cytosolic iron-sulfur (Fe-S) protein assembly (CIA) machinery required for the maturation of extramitochondrial Fe-S proteins. Part of an electron transfer chain functioning in an early step of cytosolic Fe-S biogenesis, facilitating the de novo assembly of a [4Fe-4S] cluster on the scaffold complex cfd1-nbp35. Electrons are transferred to dre2 from NADPH via the FAD- and FMN-containing protein tah18. Tah18-dre2 are also required for the assembly of the diferric tyrosyl radical cofactor of ribonucleotide reductase (RNR), probably by providing electrons for reduction during radical cofactor maturation in the catalytic small subunit rnr2. The protein is Fe-S cluster assembly protein dre2 of Neurospora crassa (strain ATCC 24698 / 74-OR23-1A / CBS 708.71 / DSM 1257 / FGSC 987).